Reading from the N-terminus, the 266-residue chain is DNA-directed RNA polymerase subunit Rpo3 (266 aa).

Residues cysteine 205, cysteine 208, and cysteine 211 each contribute to the [3Fe-4S] cluster site.

Belongs to the archaeal Rpo3/eukaryotic RPB3 RNA polymerase subunit family. Part of the RNA polymerase complex. It depends on [3Fe-4S] cluster as a cofactor.

The protein resides in the cytoplasm. It catalyses the reaction RNA(n) + a ribonucleoside 5'-triphosphate = RNA(n+1) + diphosphate. DNA-dependent RNA polymerase (RNAP) catalyzes the transcription of DNA into RNA using the four ribonucleoside triphosphates as substrates. The sequence is that of DNA-directed RNA polymerase subunit Rpo3 from Methanosarcina acetivorans (strain ATCC 35395 / DSM 2834 / JCM 12185 / C2A).